We begin with the raw amino-acid sequence, 217 residues long: Phosphoenolpyruvate guanylyltransferase (217 aa).

Phosphoenolpyruvate contacts are provided by Thr150, Gly165, and Ser168.

This sequence belongs to the CofC family.

It catalyses the reaction phosphoenolpyruvate + GTP + H(+) = enolpyruvoyl-2-diphospho-5'-guanosine + diphosphate. Its pathway is cofactor biosynthesis; coenzyme F420 biosynthesis. Functionally, guanylyltransferase that catalyzes the activation of phosphoenolpyruvate (PEP) as enolpyruvoyl-2-diphospho-5'-guanosine, via the condensation of PEP with GTP. It is involved in the biosynthesis of coenzyme F420, a hydride carrier cofactor. This is Phosphoenolpyruvate guanylyltransferase from Mycobacterium marinum (strain ATCC BAA-535 / M).